The primary structure comprises 213 residues: Chloramphenicol acetyltransferase 2 (213 aa).

His189 functions as the Proton acceptor in the catalytic mechanism.

Belongs to the chloramphenicol acetyltransferase family. As to quaternary structure, homotrimer.

It catalyses the reaction chloramphenicol + acetyl-CoA = chloramphenicol 3-acetate + CoA. In terms of biological role, this enzyme is an effector of chloramphenicol resistance in bacteria. This is Chloramphenicol acetyltransferase 2 (cmlA) from Escherichia coli.